A 213-amino-acid polypeptide reads, in one-letter code: Glutathione S-transferase (213 aa).

The GST N-terminal domain occupies 4 to 81 (AKPILYGAWI…YLEDKYPQHP (78 aa)). A GST C-terminal domain is found at 86–211 (DIKTKGLDLQ…LPQNQPDAPS (126 aa)).

The protein belongs to the GST superfamily. Zeta family.

The protein resides in the cytoplasm. It catalyses the reaction RX + glutathione = an S-substituted glutathione + a halide anion + H(+). Has a glutathione transferase activity with ethacrynic acid and nitrophenyl acetate. Has low glutathione peroxidase activity with cumene hydroperoxide. The chain is Glutathione S-transferase (GSTZ1) from Triticum aestivum (Wheat).